A 165-amino-acid chain; its full sequence is uncharacterized protein (165 aa).

The segment at 49-165 (QLKPQGPKRP…VAQQREIAQK (117 aa)) is disordered. Positions 94-106 (MNNNNNYKISYTS) are enriched in polar residues. The segment covering 120–135 (TLQRTTPQAQPTPQQP) has biased composition (low complexity). Residues 139–157 (SRSSGGITGAVNNRPQMVA) show a composition bias toward polar residues.

This is an uncharacterized protein from Caenorhabditis elegans.